A 319-amino-acid chain; its full sequence is 4-hydroxy-3-methylbut-2-enyl diphosphate reductase (319 aa).

A [4Fe-4S] cluster-binding site is contributed by cysteine 18. Residues histidine 47 and histidine 81 each coordinate (2E)-4-hydroxy-3-methylbut-2-enyl diphosphate. Positions 47 and 81 each coordinate dimethylallyl diphosphate. Isopentenyl diphosphate contacts are provided by histidine 47 and histidine 81. Cysteine 103 lines the [4Fe-4S] cluster pocket. (2E)-4-hydroxy-3-methylbut-2-enyl diphosphate is bound at residue histidine 131. Histidine 131 contributes to the dimethylallyl diphosphate binding site. Position 131 (histidine 131) interacts with isopentenyl diphosphate. Glutamate 133 serves as the catalytic Proton donor. A (2E)-4-hydroxy-3-methylbut-2-enyl diphosphate-binding site is contributed by threonine 172. Cysteine 202 provides a ligand contact to [4Fe-4S] cluster. Serine 230, serine 231, asparagine 232, and serine 275 together coordinate (2E)-4-hydroxy-3-methylbut-2-enyl diphosphate. Dimethylallyl diphosphate-binding residues include serine 230, serine 231, asparagine 232, and serine 275. Isopentenyl diphosphate is bound by residues serine 230, serine 231, asparagine 232, and serine 275.

Belongs to the IspH family. [4Fe-4S] cluster serves as cofactor.

The catalysed reaction is isopentenyl diphosphate + 2 oxidized [2Fe-2S]-[ferredoxin] + H2O = (2E)-4-hydroxy-3-methylbut-2-enyl diphosphate + 2 reduced [2Fe-2S]-[ferredoxin] + 2 H(+). The enzyme catalyses dimethylallyl diphosphate + 2 oxidized [2Fe-2S]-[ferredoxin] + H2O = (2E)-4-hydroxy-3-methylbut-2-enyl diphosphate + 2 reduced [2Fe-2S]-[ferredoxin] + 2 H(+). It functions in the pathway isoprenoid biosynthesis; dimethylallyl diphosphate biosynthesis; dimethylallyl diphosphate from (2E)-4-hydroxy-3-methylbutenyl diphosphate: step 1/1. The protein operates within isoprenoid biosynthesis; isopentenyl diphosphate biosynthesis via DXP pathway; isopentenyl diphosphate from 1-deoxy-D-xylulose 5-phosphate: step 6/6. Catalyzes the conversion of 1-hydroxy-2-methyl-2-(E)-butenyl 4-diphosphate (HMBPP) into a mixture of isopentenyl diphosphate (IPP) and dimethylallyl diphosphate (DMAPP). Acts in the terminal step of the DOXP/MEP pathway for isoprenoid precursor biosynthesis. This is 4-hydroxy-3-methylbut-2-enyl diphosphate reductase from Methylocella silvestris (strain DSM 15510 / CIP 108128 / LMG 27833 / NCIMB 13906 / BL2).